Here is a 1217-residue protein sequence, read N- to C-terminus: WD repeat-containing protein on Y chromosome (1217 aa).

WD repeat units lie at residues 155-199 (EDMT…LRSA), 323-362 (RIPL…EPSA), 366-405 (GHNG…LLQT), 456-495 (THAA…RKII), 508-547 (TIDI…VVRN), 595-635 (FHTD…RRYN), 740-779 (KVGD…IPEA), and 823-862 (GHLK…LGTL). 2 disordered regions span residues 910–929 (QVKR…VEDT) and 1033–1217 (AGGQ…KDKP). Over residues 919–929 (EREDEGEVEDT) the composition is skewed to acidic residues. Composition is skewed to polar residues over residues 1041–1054 (RASS…TNSI), 1085–1107 (FGPN…SQLK), and 1137–1179 (PVST…TSAN). The span at 1181-1190 (KPDIMPVKIK) shows a compositional bias: low complexity. A compositionally biased stretch (polar residues) spans 1198–1210 (RNTAPVQITTSIA).

This chain is WD repeat-containing protein on Y chromosome, found in Drosophila mojavensis (Fruit fly).